The chain runs to 431 residues: Glutamate-1-semialdehyde 2,1-aminomutase (431 aa).

Lysine 269 carries the N6-(pyridoxal phosphate)lysine modification.

Belongs to the class-III pyridoxal-phosphate-dependent aminotransferase family. HemL subfamily. In terms of assembly, homodimer. Pyridoxal 5'-phosphate serves as cofactor.

It localises to the cytoplasm. It carries out the reaction (S)-4-amino-5-oxopentanoate = 5-aminolevulinate. It functions in the pathway porphyrin-containing compound metabolism; protoporphyrin-IX biosynthesis; 5-aminolevulinate from L-glutamyl-tRNA(Glu): step 2/2. The polypeptide is Glutamate-1-semialdehyde 2,1-aminomutase (Francisella tularensis subsp. tularensis (strain SCHU S4 / Schu 4)).